The primary structure comprises 307 residues: Protoheme IX farnesyltransferase (307 aa).

A run of 8 helical transmembrane segments spans residues 32–52, 65–85, 108–128, 131–151, 158–178, 186–206, 251–271, and 287–307; these read MGIVNSNTLTVFTGFWLALHF, FFTIVGSGLVMAGVCCLNNYI, PGFALTFGLVILLLGFVFLLL, PMAVLMGFIGAFTYVVLYSLW, LNTVVGSISGAVPPLIGWAAI, IAWMLFLIMFIWQIPHFLALA, LGITFMVIATLLNIGWIVLGF, and FVYSLNYLTILFVSMIVVTFF.

It belongs to the UbiA prenyltransferase family. Protoheme IX farnesyltransferase subfamily. In terms of assembly, interacts with CtaA.

The protein localises to the cell membrane. It catalyses the reaction heme b + (2E,6E)-farnesyl diphosphate + H2O = Fe(II)-heme o + diphosphate. The protein operates within porphyrin-containing compound metabolism; heme O biosynthesis; heme O from protoheme: step 1/1. In terms of biological role, converts heme B (protoheme IX) to heme O by substitution of the vinyl group on carbon 2 of heme B porphyrin ring with a hydroxyethyl farnesyl side group. This chain is Protoheme IX farnesyltransferase, found in Bacillus cereus (strain ATCC 10987 / NRS 248).